A 343-amino-acid polypeptide reads, in one-letter code: MKNLTPRQAQILKAIINEYIAYAIPVGSKLLTKKYFKNLSGGTLRNEMAALEKKGFLKKNHISSGRVPSQIGYQYYVKVLNVSNTTNDLKTRLRSVILQQHKTIDEVIELGVKFINEIINLPVVLTNFSSDEVLKKIDLIILDKSFALFLLVSASGKVFKKTISYANQRQFEDIVICVRIFNDRIIDTRFSEINNQLEVLKEIIRTKVHEYQYVIDEILFKLFDLDQIEANKKIYGIQYLAKQPEFANQEKLTKILNLLEDTSVWQQMAFINQTNQKTNIVFGDQLGFKEISVASTLINTTSEAKHQLAIVGPTRMDYQKIKALLTTLKEEIEKYDKKIHNQT.

The protein belongs to the HrcA family.

In terms of biological role, negative regulator of class I heat shock genes (grpE-dnaK-dnaJ and groELS operons). Prevents heat-shock induction of these operons. The chain is Heat-inducible transcription repressor HrcA from Mycoplasma genitalium (strain ATCC 33530 / DSM 19775 / NCTC 10195 / G37) (Mycoplasmoides genitalium).